A 154-amino-acid polypeptide reads, in one-letter code: Xanthine-guanine phosphoribosyltransferase (154 aa).

5-phospho-alpha-D-ribose 1-diphosphate is bound by residues 37–38 (RG), Arg-69, and 88–96 (EDLVDSGDT). Arg-69 lines the GMP pocket. A Mg(2+)-binding site is contributed by Asp-89. 2 residues coordinate guanine: Asp-92 and Ile-135. Xanthine-binding residues include Asp-92 and Ile-135. Residues 92-96 (DSGDT) and 134-135 (WI) contribute to the GMP site.

This sequence belongs to the purine/pyrimidine phosphoribosyltransferase family. XGPT subfamily. Homotetramer. Mg(2+) is required as a cofactor.

The protein localises to the cell inner membrane. The enzyme catalyses GMP + diphosphate = guanine + 5-phospho-alpha-D-ribose 1-diphosphate. The catalysed reaction is XMP + diphosphate = xanthine + 5-phospho-alpha-D-ribose 1-diphosphate. It carries out the reaction IMP + diphosphate = hypoxanthine + 5-phospho-alpha-D-ribose 1-diphosphate. The protein operates within purine metabolism; GMP biosynthesis via salvage pathway; GMP from guanine: step 1/1. Its pathway is purine metabolism; XMP biosynthesis via salvage pathway; XMP from xanthine: step 1/1. Its function is as follows. Purine salvage pathway enzyme that catalyzes the transfer of the ribosyl-5-phosphate group from 5-phospho-alpha-D-ribose 1-diphosphate (PRPP) to the N9 position of the 6-oxopurines guanine and xanthine to form the corresponding ribonucleotides GMP (guanosine 5'-monophosphate) and XMP (xanthosine 5'-monophosphate), with the release of PPi. To a lesser extent, also acts on hypoxanthine. In Vibrio atlanticus (strain LGP32) (Vibrio splendidus (strain Mel32)), this protein is Xanthine-guanine phosphoribosyltransferase.